The primary structure comprises 466 residues: MAKTLYEKVWDSHVVVENEGQAPLIYVDRHLVHEVTSPQAFSGLKVAGRKLRAPEKTFATMDHNTSTKSASLDALSPMARIQVETLQDNCKEFGVRLYDIHHKNQGIVHVMGPELGITLPGTVIVCGDSHTATHGAFGALAFGIGTSEVEHVMATQTLRQNKAKTMKIEVRGHVAAGITAKDIVLAIIGKIGMDGGTGYVVEFCGEAIEALSMEGRMTVCNMAIEMGAKAGMVAPDGITAEYLKGREFAPKGESWEQAIAAWAELKTDEDAIFDASVVLEASDIAPQLTWGTNPGQVVAIDGLVPNPEDESNATVKASIEKALEYVALSAGTCMTDVSINKVFIGSCTNSRIEDLRDAALHAKGRKVAAGVTAIVVPGSGLVKEQAEAEGLDKIFLEAGFEWRLPGCSMCLAMNDDRLEAGDRCASTSNRNFEGRQGRGSRTHLVSPAMAAAAAVAGHFVDIRKAY.

[4Fe-4S] cluster is bound by residues Cys-347, Cys-407, and Cys-410.

The protein belongs to the aconitase/IPM isomerase family. LeuC type 1 subfamily. In terms of assembly, heterodimer of LeuC and LeuD. The cofactor is [4Fe-4S] cluster.

The catalysed reaction is (2R,3S)-3-isopropylmalate = (2S)-2-isopropylmalate. It participates in amino-acid biosynthesis; L-leucine biosynthesis; L-leucine from 3-methyl-2-oxobutanoate: step 2/4. In terms of biological role, catalyzes the isomerization between 2-isopropylmalate and 3-isopropylmalate, via the formation of 2-isopropylmaleate. This chain is 3-isopropylmalate dehydratase large subunit, found in Shewanella sediminis (strain HAW-EB3).